Here is a 304-residue protein sequence, read N- to C-terminus: Ribosomal RNA small subunit methyltransferase H (304 aa).

S-adenosyl-L-methionine contacts are provided by residues 37–39 (GGH), Asp57, Phe85, Asp100, and His107.

Belongs to the methyltransferase superfamily. RsmH family.

Its subcellular location is the cytoplasm. It carries out the reaction cytidine(1402) in 16S rRNA + S-adenosyl-L-methionine = N(4)-methylcytidine(1402) in 16S rRNA + S-adenosyl-L-homocysteine + H(+). Functionally, specifically methylates the N4 position of cytidine in position 1402 (C1402) of 16S rRNA. The protein is Ribosomal RNA small subunit methyltransferase H of Azobacteroides pseudotrichonymphae genomovar. CFP2.